We begin with the raw amino-acid sequence, 431 residues long: Keratin, type I cytoskeletal 18 (431 aa).

Residues serine 2–asparagine 83 are head. Serine 12 carries the phosphoserine modification. Threonine 13 carries the phosphothreonine modification. A phosphoserine mark is found at serine 22 and serine 36. The segment at glutamate 84–alanine 119 is coil 1A. In terms of domain architecture, IF rod spans glutamate 84–leucine 395. A linker 1 region spans residues leucine 120–isoleucine 136. A coil 1B region spans residues valine 137–leucine 228. A linker 12 region spans residues arginine 229 to isoleucine 252. The coil 2 stretch occupies residues methionine 253–glycine 390. Positions glycine 391–leucine 431 are tail.

Belongs to the intermediate filament family. In terms of assembly, heterotetramer of two type I and two type II keratins. Keratin-18 associates with keratin-8. Post-translationally, proteolytically cleaved by caspases during epithelial cell apoptosis. Expressed in simple epithelia such as intestinal mucosa, bile duct, hepatocytes, renal tubules, endothelia, ocular lens epithelium, and in a variety of mesenchymally-derived cells such as blood vessel endothelia, pillar gill cells, optic nerve glial cells, fibroblasts, interstitial cells, chondrocytes and ovarian theca cells. Also expressed in epidermis, pharyngeal mucosa, mucosa of anterior esophagus, gill mucosa and cornea.

Functionally, when phosphorylated, plays a role in filament reorganization. The sequence is that of Keratin, type I cytoskeletal 18 from Danio rerio (Zebrafish).